A 511-amino-acid chain; its full sequence is Maturase K (511 aa).

Belongs to the intron maturase 2 family. MatK subfamily.

It localises to the plastid. It is found in the chloroplast. Usually encoded in the trnK tRNA gene intron. Probably assists in splicing its own and other chloroplast group II introns. This is Maturase K from Diplacus aurantiacus (Orange bush monkey flower).